The sequence spans 137 residues: Transcription antitermination protein NusB (137 aa).

It belongs to the NusB family.

Involved in transcription antitermination. Required for transcription of ribosomal RNA (rRNA) genes. Binds specifically to the boxA antiterminator sequence of the ribosomal RNA (rrn) operons. This Proteus mirabilis (strain HI4320) protein is Transcription antitermination protein NusB.